The primary structure comprises 335 residues: MTQTRKLVTVYGATGNQGRSVVKSLLRAPDSFEVRAITRDPNSVAAQELSILGANLVQADGSQSNQMTEAFQGSWAVFLNINSDDPVFWDPKGPTEFDYGKRIIDSAIVAGVKTLVYSTGAACTELTKGTVSLRHLDTKNQIEMYARSTGAFENLVPIIPGYFLENFLFKQGAFIMGGFPWETDAEGYLTWKVPYWGGEEQIPFLSVADDFGDIVHGILISPSEYHLQVVQAMSEITDYQKMTEAFAKVTGKKTRFQPVLPTWKAFDASGNQGFEDVKSMFGFTQETQGHYFGREATDDQVSKNLKASAVLDYKESQQSPSLKTVRAWFAREFAA.

Residues 12–17, 39–43, 60–61, 81–88, K139, and 163–166 each bind NADP(+); these read GATGNQ, RDPNS, DG, INSDDPVF, and FLEN. The interval 161-206 is interaction with ASS1; that stretch reads GYFLENFLFKQGAFIMGGFPWETDAEGYLTWKVPYWGGEEQIPFLS.

This sequence belongs to the NmrA-type oxidoreductase family.

It participates in secondary metabolite biosynthesis. Functionally, nmrA-like family domain-containing oxidoreductase; part of the gene cluster that mediates the biosynthesis of the indole diterpenes penitrems. The geranylgeranyl diphosphate (GGPP) synthase ptmG catalyzes the first step in penitrem biosynthesis via conversion of farnesyl pyrophosphate and isopentyl pyrophosphate into geranylgeranyl pyrophosphate (GGPP). Condensation of indole-3-glycerol phosphate with GGPP by the prenyl transferase ptmC then forms 3-geranylgeranylindole (3-GGI). Epoxidation by the FAD-dependent monooxygenase ptmM leads to a epoxidized-GGI that is substrate of the terpene cyclase ptmB for cyclization to yield paspaline. Paspaline is subsequently converted to 13-desoxypaxilline by the cytochrome P450 monooxygenase ptmP, the latter being then converted to paxilline by the cytochrome P450 monooxygenase ptmQ. Paxilline is converted to beta-paxitriol via C-10 ketoreduction by the short-chain dehydrogenase ptmH which can be monoprenylated at the C-20 by the indole diterpene prenyltransferase ptmD. A two-step elimination (acetylation and elimination) process performed by the O-acetyltransferase ptmV and ptmI leads to the production of the prenylated form of penijanthine. The FAD-linked oxidoreductase ptmO then converts the prenylated form of penijanthine into PC-M5 which is in turn transformed into PC-M4 by the aromatic dimethylallyltransferase ptmE. Five sequential oxidative transformations performed by the cytochrome P450 monooxygenases ptmK, ptmU, ptmL, ptmN and ptmJ yield the various penitrem compounds. PtmK, ptmU and ptmM are involved in the formation of the key bicyclic ring of penitrem C via the formation of the intermediates secopenitrem D and penitrem D. PtmL catalyzes the epoxidation of penitrem D and C to yield penitrem B and F, respectively. PtmJ catalyzes the last benzylic hydroxylation to convert penitrem B to prenitrem E and penitrem F to penitrem A. The chain is NmrA-like family domain-containing oxidoreductase ptmS from Penicillium ochrochloron.